The following is a 276-amino-acid chain: Adenylate kinase (276 aa).

Residue 50-55 coordinates ATP; that stretch reads GAGKGT. Positions 70 to 99 are NMP; the sequence is ATGDMLRSQVAKKTPLGREAKKIMDQGGLV. AMP contacts are provided by residues T71, R76, 97–99, 126–129, and Q133; these read GLV and GFPR. An LID region spans residues 167 to 204; it reads GRLVHPASGRSYHTTFNPPKKAMTDDVTGEPLIQRSDD. ATP contacts are provided by residues R168 and 177–178; that span reads SY. AMP is bound by residues R201 and R212. ATP is bound at residue Q240.

The protein belongs to the adenylate kinase family. AK2 subfamily. As to quaternary structure, monomer.

It is found in the cytoplasm. The protein localises to the cytosol. The protein resides in the mitochondrion intermembrane space. The enzyme catalyses AMP + ATP = 2 ADP. In terms of biological role, catalyzes the reversible transfer of the terminal phosphate group between ATP and AMP. Plays an important role in cellular energy homeostasis and in adenine nucleotide metabolism. Adenylate kinase activity is critical for regulation of the phosphate utilization and the AMP de novo biosynthesis pathways. In Pyricularia oryzae (strain 70-15 / ATCC MYA-4617 / FGSC 8958) (Rice blast fungus), this protein is Adenylate kinase.